Consider the following 162-residue polypeptide: Probable chemoreceptor glutamine deamidase CheD (162 aa).

Belongs to the CheD family.

It carries out the reaction L-glutaminyl-[protein] + H2O = L-glutamyl-[protein] + NH4(+). In terms of biological role, probably deamidates glutamine residues to glutamate on methyl-accepting chemotaxis receptors (MCPs), playing an important role in chemotaxis. In Clostridium kluyveri (strain ATCC 8527 / DSM 555 / NBRC 12016 / NCIMB 10680 / K1), this protein is Probable chemoreceptor glutamine deamidase CheD.